The following is a 167-amino-acid chain: Small ribosomal subunit protein uS5 (167 aa).

One can recognise an S5 DRBM domain in the interval 12 to 75; sequence LEDQVVSINR…DAAKKSLIEV (64 aa).

Belongs to the universal ribosomal protein uS5 family. In terms of assembly, part of the 30S ribosomal subunit. Contacts proteins S4 and S8.

Functionally, with S4 and S12 plays an important role in translational accuracy. In terms of biological role, located at the back of the 30S subunit body where it stabilizes the conformation of the head with respect to the body. This is Small ribosomal subunit protein uS5 from Lacticaseibacillus paracasei (strain ATCC 334 / BCRC 17002 / CCUG 31169 / CIP 107868 / KCTC 3260 / NRRL B-441) (Lactobacillus paracasei).